A 271-amino-acid polypeptide reads, in one-letter code: Phosphate import ATP-binding protein PstB 3 (271 aa).

The region spanning 20–266 (LRVEGLGFYY…PQETQTRDYV (247 aa)) is the ABC transporter domain. 52 to 59 (GPSGCGKS) serves as a coordination point for ATP.

The protein belongs to the ABC transporter superfamily. Phosphate importer (TC 3.A.1.7) family. As to quaternary structure, the complex is composed of two ATP-binding proteins (PstB), two transmembrane proteins (PstC and PstA) and a solute-binding protein (PstS).

It localises to the cell inner membrane. It carries out the reaction phosphate(out) + ATP + H2O = ADP + 2 phosphate(in) + H(+). In terms of biological role, part of the ABC transporter complex PstSACB involved in phosphate import. Responsible for energy coupling to the transport system. In Synechocystis sp. (strain ATCC 27184 / PCC 6803 / Kazusa), this protein is Phosphate import ATP-binding protein PstB 3.